A 208-amino-acid chain; its full sequence is ATP-dependent Clp protease proteolytic subunit (208 aa).

Serine 105 acts as the Nucleophile in catalysis. Histidine 130 is a catalytic residue.

It belongs to the peptidase S14 family. In terms of assembly, fourteen ClpP subunits assemble into 2 heptameric rings which stack back to back to give a disk-like structure with a central cavity, resembling the structure of eukaryotic proteasomes.

It localises to the cytoplasm. The enzyme catalyses Hydrolysis of proteins to small peptides in the presence of ATP and magnesium. alpha-casein is the usual test substrate. In the absence of ATP, only oligopeptides shorter than five residues are hydrolyzed (such as succinyl-Leu-Tyr-|-NHMec, and Leu-Tyr-Leu-|-Tyr-Trp, in which cleavage of the -Tyr-|-Leu- and -Tyr-|-Trp bonds also occurs).. Functionally, cleaves peptides in various proteins in a process that requires ATP hydrolysis. Has a chymotrypsin-like activity. Plays a major role in the degradation of misfolded proteins. The sequence is that of ATP-dependent Clp protease proteolytic subunit from Xylella fastidiosa (strain M12).